Here is a 637-residue protein sequence, read N- to C-terminus: Biosynthetic arginine decarboxylase (637 aa).

An N6-(pyridoxal phosphate)lysine modification is found at lysine 101. A substrate-binding site is contributed by 286–296 (FDVGGGLAVDY).

This sequence belongs to the Orn/Lys/Arg decarboxylase class-II family. SpeA subfamily. The cofactor is Mg(2+). It depends on pyridoxal 5'-phosphate as a cofactor.

The catalysed reaction is L-arginine + H(+) = agmatine + CO2. It participates in amine and polyamine biosynthesis; agmatine biosynthesis; agmatine from L-arginine: step 1/1. Its function is as follows. Catalyzes the biosynthesis of agmatine from arginine. The protein is Biosynthetic arginine decarboxylase of Shewanella sp. (strain ANA-3).